The chain runs to 328 residues: Peroxisomal adenine nucleotide transporter 1 (328 aa).

A run of 6 helical transmembrane segments spans residues 1–21 (MLTL…NIAV), 78–98 (TVTT…YTFI), 128–148 (LVLG…MAVV), 185–202 (LRTG…YASF), 226–246 (FILG…LIVA), and 277–297 (WKGV…LFAF). Solcar repeat units follow at residues 1–101 (MLTL…IRKS), 122–208 (PSTI…LKEV), and 220–304 (LSAV…LTKS).

It belongs to the mitochondrial carrier (TC 2.A.29) family.

The protein localises to the peroxisome membrane. In terms of biological role, adenine nucleotide transporter involved in the uniport of ATP and adenine nucleotide hetero-exchange transport between the cytosol and the peroxisomal lumen. This transport is accompanied by a proton transport from the peroxisomal lumen to the cytosol. Transport of ATP into the peroxisome is required for beta-oxidation of medium-chain fatty acids. Required for growth on medium-chain fatty acids, pH gradient formation in peroxisomes and for normal peroxisome proliferation. The sequence is that of Peroxisomal adenine nucleotide transporter 1 (ANT1) from Saccharomyces cerevisiae (strain ATCC 204508 / S288c) (Baker's yeast).